The sequence spans 311 residues: MQENQELTKKEKYNIDKLQKRLRRNVGEAIADFNMIEEGDRIMVCLSGGKDSYTMLEILRNLQKSAPISFSLVAVNLDQKQPGFPEHILPAYLEQLGVEYKIVEENTYGIVKEKIPEGKTTCSLCSRLRRGILYRTATELGATKIALGHHRDDILQTLFLNMFYGGKMKGMPPKLMSDDGKHIVIRPLAYCREKDIERFSQAKGFPIIPCNLCGSQPNLQRQVIADMLRDWDKRYPGRIETMFSAMQNVVPSHLSDVNLFDFKGITHGSEVVDGGDLAFDREDIPLQPAGWQPEEEDARLDELRLNVVEVK.

Positions 47 to 52 (SGGKDS) match the PP-loop motif motif. [4Fe-4S] cluster is bound by residues Cys-122, Cys-125, and Cys-213.

Belongs to the TtcA family. As to quaternary structure, homodimer. Mg(2+) serves as cofactor. Requires [4Fe-4S] cluster as cofactor.

The protein localises to the cytoplasm. The enzyme catalyses cytidine(32) in tRNA + S-sulfanyl-L-cysteinyl-[cysteine desulfurase] + AH2 + ATP = 2-thiocytidine(32) in tRNA + L-cysteinyl-[cysteine desulfurase] + A + AMP + diphosphate + H(+). Its pathway is tRNA modification. Catalyzes the ATP-dependent 2-thiolation of cytidine in position 32 of tRNA, to form 2-thiocytidine (s(2)C32). The sulfur atoms are provided by the cysteine/cysteine desulfurase (IscS) system. This chain is tRNA-cytidine(32) 2-sulfurtransferase, found in Klebsiella pneumoniae subsp. pneumoniae (strain ATCC 700721 / MGH 78578).